Reading from the N-terminus, the 335-residue chain is Adenosine deaminase (335 aa).

Zn(2+) contacts are provided by His-12 and His-14. Substrate contacts are provided by His-14 and Asp-16. His-197 contacts Zn(2+). The Proton donor role is filled by Glu-200. Asp-278 provides a ligand contact to Zn(2+).

It belongs to the metallo-dependent hydrolases superfamily. Adenosine and AMP deaminases family. Adenosine deaminase subfamily. It depends on Zn(2+) as a cofactor.

It catalyses the reaction adenosine + H2O + H(+) = inosine + NH4(+). It carries out the reaction 2'-deoxyadenosine + H2O + H(+) = 2'-deoxyinosine + NH4(+). Functionally, catalyzes the hydrolytic deamination of adenosine and 2-deoxyadenosine. This is Adenosine deaminase from Clostridium botulinum (strain ATCC 19397 / Type A).